A 364-amino-acid chain; its full sequence is Fructose-bisphosphate aldolase B (364 aa).

N-acetylalanine is present on A2. At K13 the chain carries N6-succinyllysine. At S36 the chain carries Phosphoserine. T39 is subject to Phosphothreonine. Residue R43 participates in beta-D-fructose 1,6-bisphosphate binding. S89 is modified (phosphoserine). A Phosphothreonine modification is found at T119. K121 bears the N6-succinyllysine mark. Phosphoserine is present on S132. E188 functions as the Proton acceptor in the catalytic mechanism. The active-site Schiff-base intermediate with dihydroxyacetone-P is K230. S272, S276, S299, and S301 each carry phosphoserine. Residue 272–274 (SGG) coordinates beta-D-fructose 1,6-bisphosphate. R304 contacts beta-D-fructose 1,6-bisphosphate. At S309 the chain carries Phosphoserine. K317 is modified (N6-succinyllysine).

The protein belongs to the class I fructose-bisphosphate aldolase family. Homotetramer. Interacts with BBS1, BBS2, BBS4 and BBS7. Forms a ternary complex with G6PD and TP53; this interaction is direct.

The protein resides in the cytoplasm. Its subcellular location is the cytosol. The protein localises to the cytoskeleton. It is found in the microtubule organizing center. It localises to the centrosome. The protein resides in the centriolar satellite. It catalyses the reaction beta-D-fructose 1,6-bisphosphate = D-glyceraldehyde 3-phosphate + dihydroxyacetone phosphate. It carries out the reaction beta-D-fructose 1-phosphate = D-glyceraldehyde + dihydroxyacetone phosphate. Its pathway is carbohydrate degradation; glycolysis; D-glyceraldehyde 3-phosphate and glycerone phosphate from D-glucose: step 4/4. It participates in carbohydrate biosynthesis; gluconeogenesis. The protein operates within carbohydrate metabolism; fructose metabolism. Its function is as follows. Catalyzes the aldol cleavage of fructose 1,6-biphosphate to form two triosephosphates dihydroxyacetone phosphate and D-glyceraldehyde 3-phosphate in glycolysis as well as the reverse stereospecific aldol addition reaction in gluconeogenesis. In fructolysis, metabolizes fructose 1-phosphate derived from the phosphorylation of dietary fructose by fructokinase into dihydroxyacetone phosphate and D-glyceraldehyde. Acts as an adapter independently of its enzymatic activity, exerts a tumor suppressor role by stabilizing the ternary complex with G6PD and TP53 to inhibit G6PD activity and keep oxidative pentose phosphate metabolism in check. In Pongo abelii (Sumatran orangutan), this protein is Fructose-bisphosphate aldolase B (ALDOB).